The primary structure comprises 251 residues: Ubiquinone/menaquinone biosynthesis C-methyltransferase UbiE (251 aa).

S-adenosyl-L-methionine is bound by residues Thr74, Asp92, and Ser132.

Belongs to the class I-like SAM-binding methyltransferase superfamily. MenG/UbiE family.

It catalyses the reaction a 2-demethylmenaquinol + S-adenosyl-L-methionine = a menaquinol + S-adenosyl-L-homocysteine + H(+). It carries out the reaction a 2-methoxy-6-(all-trans-polyprenyl)benzene-1,4-diol + S-adenosyl-L-methionine = a 5-methoxy-2-methyl-3-(all-trans-polyprenyl)benzene-1,4-diol + S-adenosyl-L-homocysteine + H(+). It functions in the pathway quinol/quinone metabolism; menaquinone biosynthesis; menaquinol from 1,4-dihydroxy-2-naphthoate: step 2/2. The protein operates within cofactor biosynthesis; ubiquinone biosynthesis. Functionally, methyltransferase required for the conversion of demethylmenaquinol (DMKH2) to menaquinol (MKH2) and the conversion of 2-polyprenyl-6-methoxy-1,4-benzoquinol (DDMQH2) to 2-polyprenyl-3-methyl-6-methoxy-1,4-benzoquinol (DMQH2). This Rubrivivax gelatinosus (strain NBRC 100245 / IL144) protein is Ubiquinone/menaquinone biosynthesis C-methyltransferase UbiE.